The following is a 510-amino-acid chain: MNPQTDNVFYATNAFTGEALPLAFPVHTEVEVNQAATAAAKVARDFRRLNNSKRASLLRTIASELEARSDDIIARAHLETALPEVRLTGEIARTANQLRLFADVVNSGSYHQAILDTPNPTRAPLPKPDIRRQQIALGPVAVFGASNFPLAFSAAGGDTASALAAGCPVIVKGHTAHPGTSQIVAECIEQALKQEQLPQAIFTLLQGNQRALGQALVSHPEIKAVGFTGSVGGGRALFNLAHERPEPIPFYGELGAINPTFIFPSAMRAKADLADQFVASMTMGCGQFCTKPGVVFALNTPETQAFIETAQSLIRQQSPSTLLTPGIRDSYQSQVVSRGSDDGIDVTFSQAESPCVASALFVTSSENWRKHPAWEEEIFGPQSLIVVCENVADMLSLSEMLAGSLTATIHATEEDYPQVSQLIPRLEEIAGRLVFNGWPTGVEVGYAMVHGGPYPASTHSASTSVGAEAIHRWLRPVAYQALPESLLPDSLKAENPLEIARAVDGKAAHS.

229–234 (GSVGGG) provides a ligand contact to NADP(+). Residues E253 and C289 contribute to the active site.

It belongs to the aldehyde dehydrogenase family. Homodimer.

The catalysed reaction is an aldehyde + NADP(+) + H2O = a carboxylate + NADPH + 2 H(+). Catalyzes the oxidation of long-chain aliphatic aldehydes to acids. May be implicated in controlling luminescence as it catalyzes the oxidation of the fatty aldehyde substrate for the light-emitting reaction. This Vibrio harveyi (Beneckea harveyi) protein is NADP-dependent fatty aldehyde dehydrogenase (aldH).